Reading from the N-terminus, the 85-residue chain is Depressant insect toxin BmK ITa1 (85 aa).

Positions 1–21 (MKLFLLLLISASMLIDGLVNA) are cleaved as a signal peptide. The LCN-type CS-alpha/beta domain occupies 22–82 (DGYIRGSNGC…TWKSESNTCG (61 aa)). 4 cysteine pairs are disulfide-bonded: cysteine 31–cysteine 81, cysteine 35–cysteine 56, cysteine 42–cysteine 63, and cysteine 46–cysteine 65. Residue glycine 82 is modified to Glycine amide.

It belongs to the long (4 C-C) scorpion toxin superfamily. Sodium channel inhibitor family. Beta subfamily. In terms of tissue distribution, expressed by the venom gland.

The protein localises to the secreted. Functionally, depressant insect toxins cause a transient contraction paralysis followed by a slow flaccid paralysis. They bind voltage-independently to sodium channels (Nav) and block action potentials, primarily by depolarizing the axonal membrane and suppressing the sodium current. The polypeptide is Depressant insect toxin BmK ITa1 (Olivierus martensii (Manchurian scorpion)).